We begin with the raw amino-acid sequence, 180 residues long: ATP synthase subunit delta (180 aa).

Belongs to the ATPase delta chain family. In terms of assembly, F-type ATPases have 2 components, F(1) - the catalytic core - and F(0) - the membrane proton channel. F(1) has five subunits: alpha(3), beta(3), gamma(1), delta(1), epsilon(1). F(0) has three main subunits: a(1), b(2) and c(10-14). The alpha and beta chains form an alternating ring which encloses part of the gamma chain. F(1) is attached to F(0) by a central stalk formed by the gamma and epsilon chains, while a peripheral stalk is formed by the delta and b chains.

It is found in the cell membrane. In terms of biological role, f(1)F(0) ATP synthase produces ATP from ADP in the presence of a proton or sodium gradient. F-type ATPases consist of two structural domains, F(1) containing the extramembraneous catalytic core and F(0) containing the membrane proton channel, linked together by a central stalk and a peripheral stalk. During catalysis, ATP synthesis in the catalytic domain of F(1) is coupled via a rotary mechanism of the central stalk subunits to proton translocation. Functionally, this protein is part of the stalk that links CF(0) to CF(1). It either transmits conformational changes from CF(0) to CF(1) or is implicated in proton conduction. The chain is ATP synthase subunit delta from Dehalococcoides mccartyi (strain ATCC BAA-2100 / JCM 16839 / KCTC 5957 / BAV1).